The following is a 102-amino-acid chain: MSPRKTYILKLYVAGNTPNSVRALKTLKNILEVEFQGVYALKVIDVLKNPQLAEEDKILATPTLAKVLPLPVRRIIGDLSDREKVLIGLDLLYGELQDSDDF.

This sequence belongs to the KaiB family. As to quaternary structure, undergoes a major conformational rearrangment; in the free state forms homotetramers with 2 dimers. When bound to the CI domain of KaiC switches to a monomeric thioredoxin-fold (KaiB(fs)). Monomers, homodimers and homotetramers are detected in solution; at low concentrations only monomers are seen. In vitro forms KaiC(6):KaiB(1) and KaiC(6):KaiB(6) complexes. Only associates with 'Ser-431'-phosphorylated KaiC (and not with doubly phosphorylated KaiC). Complex formation between KaiB and KaiC is regulated by the phosphorylation state of KaiC and by an ATP hydrolysis-driven conformation change in the CI ring of KaiC; complex formation is slow. Slow complex formation is crucial for the timing of the circadian period. In low resolution cryo-EM forms a KaiC(6):KaiB(6) complex. The KaiABC complex composition changes during the circadian cycle to control KaiC phosphorylation. Complexes KaiC(6), KaiA(2-4):KaiC(6), KaiB(6):KaiC(6) and KaiC(6):KaiB(6):KaiA(12) are among the most important forms, many form cooperatively. The KaiB:KaiC complex is more prevalent at 16 hours (in the dark) than at 4 hours (in the light) in the circadian cycle. The KaiA:KaiB complex is only found at 20-24 hours in the circadian cycle (subjective night). Binds to the CI domain of KaiC; SasA and KaiB compete to bind to the CI domain.

It is found in the cytoplasm. The protein localises to the cell membrane. Its function is as follows. Key component of the KaiABC oscillator complex, which constitutes the main circadian regulator in cyanobacteria. Complex composition changes during the circadian cycle to control KaiC phosphorylation. KaiA stimulates KaiC autophosphorylation, while KaiB sequesters KaiA, leading to KaiC autodephosphorylation. KaiA binding to the KaiC CII domain yields KaiA(2-4):KaiC(6) complexes which stimulate KaiC autophosphorylation. Phospho-Ser-431 KaiC accumulation triggers binding of KaiB to form the KaiB(6):KaiC(6) complex, leading to changes in the output regulators CikA and SasA. KaiB switches to a thioredoxin-like fold (KaiB(fs)) in complex with KaiC. KaiB(6):KaiC(6) formation exposes a site for KaiA binding that sequesters KaiA from the CII domain, making the KaiC(6):KaiB(6):KaiA(12) complex that results in KaiC autodephosphorylation. Complete dephosphorylation of KaiC leads to dissociation of KaiA(2):KaiB(1), completing 1 cycle of the Kai oscillator. In terms of biological role, circadian oscillations can be generated in vitro by incubating KaiA, KaiB and KaiC with 1 mM ATP. The cycle is self-sustainable for at least 3 cycles and resistant to temperature changes. A very robust clock is reconstituted with KaiA, KaiB, KaiC, SasA, CikA and RpaA; output is measured by transcription from an appropriate reporter. Functionally, a metamorphic protein which reversibly switches between an inactive tetrameric fold and a rare, thioredoxin-like monomeric fold (KaiB(fs)). KaiB(fs) binds phospho-KaiC, KaiA and CikA. KaiA and CikA compete for binding to KaiB(fs), and KaiB(fs) and SasA compete for binding to KaiC, thus the clock oscillator and output signal pathway are tightly coupled. The polypeptide is Circadian clock oscillator protein KaiB (Synechococcus elongatus (strain ATCC 33912 / PCC 7942 / FACHB-805) (Anacystis nidulans R2)).